Consider the following 147-residue polypeptide: Large ribosomal subunit protein uL13 (147 aa).

It belongs to the universal ribosomal protein uL13 family. As to quaternary structure, part of the 50S ribosomal subunit.

Functionally, this protein is one of the early assembly proteins of the 50S ribosomal subunit, although it is not seen to bind rRNA by itself. It is important during the early stages of 50S assembly. This Mycobacterium leprae (strain Br4923) protein is Large ribosomal subunit protein uL13.